The sequence spans 356 residues: Dual-specificity RNA methyltransferase RlmN (356 aa).

The active-site Proton acceptor is the glutamate 95. The region spanning 101-332 (EDERGTLCIS…VTVIRDRRGE (232 aa)) is the Radical SAM core domain. Residues cysteine 108 and cysteine 338 are joined by a disulfide bond. [4Fe-4S] cluster-binding residues include cysteine 115, cysteine 119, and cysteine 122. S-adenosyl-L-methionine-binding positions include 165–166 (GE), serine 197, 219–221 (SLH), and asparagine 295. Cysteine 338 serves as the catalytic S-methylcysteine intermediate.

The protein belongs to the radical SAM superfamily. RlmN family. It depends on [4Fe-4S] cluster as a cofactor.

It is found in the cytoplasm. The catalysed reaction is adenosine(2503) in 23S rRNA + 2 reduced [2Fe-2S]-[ferredoxin] + 2 S-adenosyl-L-methionine = 2-methyladenosine(2503) in 23S rRNA + 5'-deoxyadenosine + L-methionine + 2 oxidized [2Fe-2S]-[ferredoxin] + S-adenosyl-L-homocysteine. The enzyme catalyses adenosine(37) in tRNA + 2 reduced [2Fe-2S]-[ferredoxin] + 2 S-adenosyl-L-methionine = 2-methyladenosine(37) in tRNA + 5'-deoxyadenosine + L-methionine + 2 oxidized [2Fe-2S]-[ferredoxin] + S-adenosyl-L-homocysteine. Specifically methylates position 2 of adenine 2503 in 23S rRNA and position 2 of adenine 37 in tRNAs. m2A2503 modification seems to play a crucial role in the proofreading step occurring at the peptidyl transferase center and thus would serve to optimize ribosomal fidelity. The protein is Dual-specificity RNA methyltransferase RlmN of Magnetococcus marinus (strain ATCC BAA-1437 / JCM 17883 / MC-1).